Here is a 140-residue protein sequence, read N- to C-terminus: 3-hydroxyacyl-[acyl-carrier-protein] dehydratase FabZ (140 aa).

The active site involves His-48.

The protein belongs to the thioester dehydratase family. FabZ subfamily.

It is found in the cytoplasm. The catalysed reaction is a (3R)-hydroxyacyl-[ACP] = a (2E)-enoyl-[ACP] + H2O. Involved in unsaturated fatty acids biosynthesis. Catalyzes the dehydration of short chain beta-hydroxyacyl-ACPs and long chain saturated and unsaturated beta-hydroxyacyl-ACPs. This chain is 3-hydroxyacyl-[acyl-carrier-protein] dehydratase FabZ, found in Caldicellulosiruptor bescii (strain ATCC BAA-1888 / DSM 6725 / KCTC 15123 / Z-1320) (Anaerocellum thermophilum).